A 93-amino-acid chain; its full sequence is Large ribosomal subunit protein eL42 (93 aa).

Positions 11, 14, 71, and 74 each coordinate Zn(2+). Residues 11–74 (CPYCKKHTSH…IALRLVCDEC (64 aa)) form a C4-type zinc finger.

It belongs to the eukaryotic ribosomal protein eL42 family. As to quaternary structure, part of the 50S ribosomal subunit. The cofactor is Zn(2+).

Functionally, binds to the 23S rRNA. This is Large ribosomal subunit protein eL42 from Thermoplasma acidophilum (strain ATCC 25905 / DSM 1728 / JCM 9062 / NBRC 15155 / AMRC-C165).